We begin with the raw amino-acid sequence, 296 residues long: Short-chain dehydrogenase/reductase ascJ (296 aa).

NADP(+)-binding residues include Ile-28, Asp-66, and Asn-93. Residue Ser-155 is the Proton donor of the active site. 3 residues coordinate NADP(+): Tyr-168, Lys-172, and Thr-205. The active-site Proton acceptor is the Tyr-168. Lys-172 serves as the catalytic Lowers pKa of active site Tyr.

This sequence belongs to the short-chain dehydrogenases/reductases (SDR) family.

The catalysed reaction is ascofuranol + A = ascofuranone + AH2. Its pathway is secondary metabolite biosynthesis; terpenoid biosynthesis. Short-chain dehydrogenase/reductase; part of the asc-2 gene cluster that mediates the biosynthesis of ascofuranone, a strong inhibitor of cyanide-insensitive alternative oxidases and a promising drug candidate against African trypanosomiasis. The first step in the pathway is performed by the non-reducing polyketide synthase ascC that produces orsellinic acid by condensing acetyl-CoA with 3 malonyl-CoA units. Orsellinic acid is then prenylated by the prenyltransferase ascA to yield ilicicolinic acid B. Ilicicolinic acid B is further reduced to ilicicolin B by the reductase ascB. The halogenase ascD then chlorinates ilicicolin B to produce ilicicolin A which is converted to ilicicolin A epoxide by the cytochrome P450 monooxygenase ascE that catalyzes stereoselective epoxidation of the terminal double bond of the prenyl group. Ilicicolin A epoxide is the last common precursor for the biosynthesis of ascofuranone and ascochlorin. The terpene cyclase ascF produces a monocyclic terpene, and the cyclization reaction is proposed to be initiated by protonation of the terminal epoxide of ilicicolin A epoxide to generate a monocyclic tertiarycation, which is followed by a series of hydride and methyl shifts with abstraction of proton, leading to the formation of the (14S,15R,19R)-trimethylcyclohexanone ring structure of ilicicolin C, which is finally reduced to ascochlorin by the dehydrogenase ascG. On the other hand, ilicicolin A epoxide is hydroxylated by the cytochrome P450 monooxygenase ascH, and the resultant product is cyclized by the terpene cyclase ascI to ascofuranol via protonation-initiated epoxide ring opening, which facilitates the 6-endo-tet cyclization to form the tetrahy-drofuran ring. Finally, ascofuranol is oxidized into ascofuranone by ascJ. The chain is Short-chain dehydrogenase/reductase ascJ from Acremonium egyptiacum (Oospora egyptiaca).